Consider the following 367-residue polypeptide: Nuclear hormone receptor-like 1 (367 aa).

Residues 32-107 constitute a DNA-binding region (nuclear receptor); sequence GQPCVVCGDD…NGMTKSLVLN (76 aa). 2 consecutive NR C4-type zinc fingers follow at residues 35-55 and 71-95; these read CVVC…CEGC and CKSI…FQKC. The NR LBD domain occupies 145-367; sequence EFQSRIDQVT…IANILLFKFT (223 aa).

The protein belongs to the nuclear hormone receptor family.

It localises to the nucleus. The chain is Nuclear hormone receptor-like 1 (nhr-1) from Onchocerca volvulus.